A 126-amino-acid polypeptide reads, in one-letter code: UPF0102 protein BCAN_A0183 (126 aa).

This sequence belongs to the UPF0102 family.

This Brucella canis (strain ATCC 23365 / NCTC 10854 / RM-666) protein is UPF0102 protein BCAN_A0183.